The sequence spans 685 residues: Phenoloxidase subunit 1 (685 aa).

A propeptide spanning residues 1–51 (MSDAKNNLLLFFDRPSEPCFMQKGEENAVFEIPDNYYPEKYQRVSNAIGNR) is cleaved from the precursor. N184 carries N-linked (GlcNAc...) asparagine glycosylation. Cu cation contacts are provided by H209, H213, and H239. N-linked (GlcNAc...) asparagine glycans are attached at residues N254 and N324. Catalysis depends on E351, which acts as the Proton acceptor. Cu cation is bound by residues H366, H370, and H406. N491 and N540 each carry an N-linked (GlcNAc...) asparagine glycan. Disulfide bonds link C581-C623 and C583-C630.

As to quaternary structure, heterodimer. The cofactor is Cu(2+). The N-terminus is blocked. In terms of tissue distribution, synthesized by hemocytes and released into the hemolymph plasma.

Its subcellular location is the secreted. It carries out the reaction 2 L-dopa + O2 = 2 L-dopaquinone + 2 H2O. It catalyses the reaction L-tyrosine + O2 = L-dopaquinone + H2O. Functionally, this is a copper-containing oxidase that functions in the formation of pigments such as melanins and other polyphenolic compounds. Catalyzes the rate-limiting conversions of tyrosine to DOPA, DOPA to DOPA-quinone and possibly 5,6 dihydroxyindole to indole-5'6 quinone. The sequence is that of Phenoloxidase subunit 1 from Bombyx mori (Silk moth).